The following is a 1264-amino-acid chain: Imitation switch two complex protein 1 (1264 aa).

The region spanning 23–130 is the WAC domain; sequence VQVWHIEETG…GEVVYLRKQK (108 aa). Disordered regions lie at residues 130–153, 275–374, 482–508, 627–655, and 803–825; these read KDSSTTSSNSQQSTPQPDDMVEIN, PVVA…PANA, QEIENNGLPMKNKAETTTEEDSENPSD, ATEVQKESDAKNETNSESDSKSDSDSEER, and LNKTDENTPSADGADKKDDSESN. Low complexity predominate over residues 132-147; sequence SSTTSSNSQQSTPQPD. Composition is skewed to polar residues over residues 280–289 and 299–310; these read RSNSANVSSP and KSSGKSNTSNDA. The DDT domain occupies 423–483; it reads FDSFGKLLQA…IRTQTSKEQE (61 aa).

As to quaternary structure, component of the ISW2 complex, which at least consists of ISW2, ITC1, DLS1 and DPB4. May form a stable subcomplex with ISW2.

It localises to the nucleus. Functionally, functions as a component of the ISW2 complex, which acts in remodeling the chromatin by catalyzing an ATP-dependent alteration in the structure of nucleosomal DNA. The ISW2 complex is involved in coordinating transcriptional repression and in inheritance of telomeric silencing. It is involved in repression of MAT a-specific genes, INO1, and early meiotic genes during mitotic growth dependent upon transcription factor UME6 and in a parallel pathway to the RPD3-SIN3 histone deacetylase complex. ITC1 is required for nucleosome-stimulated ATPase activity and chromatin-remodeling activity of the complex. Required for the repression of MATa a-specific genes. The sequence is that of Imitation switch two complex protein 1 (ITC1) from Saccharomyces cerevisiae (strain ATCC 204508 / S288c) (Baker's yeast).